The following is a 399-amino-acid chain: Argininosuccinate synthase (399 aa).

A9–S17 contributes to the ATP binding site. Y87 lines the L-citrulline pocket. ATP is bound at residue G117. 3 residues coordinate L-aspartate: T119, N123, and D124. N123 is a binding site for L-citrulline. L-citrulline contacts are provided by R127, S176, S185, E261, and Y273.

Belongs to the argininosuccinate synthase family. Type 1 subfamily. As to quaternary structure, homotetramer.

The protein localises to the cytoplasm. It catalyses the reaction L-citrulline + L-aspartate + ATP = 2-(N(omega)-L-arginino)succinate + AMP + diphosphate + H(+). Its pathway is amino-acid biosynthesis; L-arginine biosynthesis; L-arginine from L-ornithine and carbamoyl phosphate: step 2/3. This is Argininosuccinate synthase from Chlorobium chlorochromatii (strain CaD3).